Reading from the N-terminus, the 165-residue chain is 2-C-methyl-D-erythritol 2,4-cyclodiphosphate synthase (165 aa).

A divalent metal cation contacts are provided by Asp-12 and His-14. 4-CDP-2-C-methyl-D-erythritol 2-phosphate is bound by residues 12–14 (DIH) and 38–39 (HS). His-46 is a binding site for a divalent metal cation. 4-CDP-2-C-methyl-D-erythritol 2-phosphate contacts are provided by residues 60–62 (DIG), 136–139 (TTNE), and Arg-146.

This sequence belongs to the IspF family. As to quaternary structure, homotrimer. It depends on a divalent metal cation as a cofactor.

It carries out the reaction 4-CDP-2-C-methyl-D-erythritol 2-phosphate = 2-C-methyl-D-erythritol 2,4-cyclic diphosphate + CMP. Its pathway is isoprenoid biosynthesis; isopentenyl diphosphate biosynthesis via DXP pathway; isopentenyl diphosphate from 1-deoxy-D-xylulose 5-phosphate: step 4/6. Its function is as follows. Involved in the biosynthesis of isopentenyl diphosphate (IPP) and dimethylallyl diphosphate (DMAPP), two major building blocks of isoprenoid compounds. Catalyzes the conversion of 4-diphosphocytidyl-2-C-methyl-D-erythritol 2-phosphate (CDP-ME2P) to 2-C-methyl-D-erythritol 2,4-cyclodiphosphate (ME-CPP) with a corresponding release of cytidine 5-monophosphate (CMP). In Nostoc sp. (strain PCC 7120 / SAG 25.82 / UTEX 2576), this protein is 2-C-methyl-D-erythritol 2,4-cyclodiphosphate synthase.